Reading from the N-terminus, the 279-residue chain is Release factor glutamine methyltransferase (279 aa).

The S-adenosyl-L-methionine site is built by D139 and N182. Residue N182 to Y185 coordinates substrate.

The protein belongs to the protein N5-glutamine methyltransferase family. PrmC subfamily.

The catalysed reaction is L-glutaminyl-[peptide chain release factor] + S-adenosyl-L-methionine = N(5)-methyl-L-glutaminyl-[peptide chain release factor] + S-adenosyl-L-homocysteine + H(+). Methylates the class 1 translation termination release factors RF1/PrfA and RF2/PrfB on the glutamine residue of the universally conserved GGQ motif. The polypeptide is Release factor glutamine methyltransferase (Thermodesulfovibrio yellowstonii (strain ATCC 51303 / DSM 11347 / YP87)).